An 873-amino-acid chain; its full sequence is MAFQSPLTFNDEQLTVAQLKSQLDLFANAQKQAFLNHHPVTDLVLSRAEYMDLLLTRLWRYYGFSEIHNISLVAVGGYGRGELHPLSDIDILVLSKHKLPGELETKLSEFITLLWDLRLEVGHAVRTVEECAAIGREDLTVATNLQEARLLCGSENTFQDLKKVVLSDSFWPSETFYRAKIQEQRERHARYHDTTYNLEPDIKSTPGGLRDIHTLSWVARRHFGATSLLEMSRYGFLTDAEYRELVECQDFLWRVRFALHIELKRYDNRLTFAHQIQVAEHLGFKGEGNRGIEMMMKEFYRTLRRVAELNKMLLKLFDQAIINGGETEPAVIINEDFQRRGRLIEARKPALFQARPETILDMFLHIANDSTIDSVSPPTLRQLRTARRRLNKFLHTIPEAREKFMELVRHPNALHRAFSLMHKLGVLAAYLPQWSQIVGQMQFDLFHVYTVDEHSVRLLNHINTFSYAKNHDKHPICCEVYPRLQKKELLLLAAIFHDIGKGRGGDHSEIGEKEAYDFCIEHGLSKPEAKLVSWLVRHHLLMSVTAQRRDIYDPEVITEFAKQVRDEERLEYLVCLTVADICATNPELWNSWKRTLLAELFYSTQRALRRGLENPVDVRERIRHNQQLASALLRKEGFTAREIEVLWQRFKADYFLRHTHKQIAWHCEHILRMDNPEQPLVLMSKKATRGGTEVFVYTKDQHALFATVVAELDRRNFNVHDAQIMSSKDGYVLDTFMVLDQHGQAIDVDNHKAVIKHLMHVLADGRPTKVKTRRTPYKLQHFKVKTKVDFLPTKSKKRTLMELVALDTPGLLAITGATFADMGFNLHGAKITTIGERAEDLFILTSENGGRLSEEQELQLREKLIHNIAELAP.

Residues 1–332 (MAFQSPLTFN…NGGETEPAVI (332 aa)) are uridylyltransferase. The tract at residues 333-692 (INEDFQRRGR…MSKKATRGGT (360 aa)) is uridylyl-removing. The region spanning 451 to 573 (VDEHSVRLLN…VRDEERLEYL (123 aa)) is the HD domain. 2 ACT domains span residues 693–773 (EVFV…VKTR) and 800–873 (LMEL…ELAP).

Belongs to the GlnD family. Mg(2+) serves as cofactor.

It carries out the reaction [protein-PII]-L-tyrosine + UTP = [protein-PII]-uridylyl-L-tyrosine + diphosphate. It catalyses the reaction [protein-PII]-uridylyl-L-tyrosine + H2O = [protein-PII]-L-tyrosine + UMP + H(+). Its activity is regulated as follows. Uridylyltransferase (UTase) activity is inhibited by glutamine, while glutamine activates uridylyl-removing (UR) activity. Its function is as follows. Modifies, by uridylylation and deuridylylation, the PII regulatory proteins (GlnB and homologs), in response to the nitrogen status of the cell that GlnD senses through the glutamine level. Under low glutamine levels, catalyzes the conversion of the PII proteins and UTP to PII-UMP and PPi, while under higher glutamine levels, GlnD hydrolyzes PII-UMP to PII and UMP (deuridylylation). Thus, controls uridylylation state and activity of the PII proteins, and plays an important role in the regulation of nitrogen assimilation and metabolism. The polypeptide is Bifunctional uridylyltransferase/uridylyl-removing enzyme (Vibrio vulnificus (strain CMCP6)).